The primary structure comprises 537 residues: Beta-arabinofuranosyltransferase RAY1 (537 aa).

Positions 370–372 (DVD) match the DXD motif motif.

The protein belongs to the glycosyltransferase 77 family.

Functionally, beta-arabinofuranosyltransferase that transfers specifically an arabinosyl residue from UDP-arabinofuranose to the monosaccharide galactose or beta-methyl-galactoside in vitro. Catalyzes the addition of a beta-arabinofuranose residue onto a beta-galactosyl residue of an Yariv-precipitable wall polymer in vivo. The sequence is that of Beta-arabinofuranosyltransferase RAY1 from Arabidopsis thaliana (Mouse-ear cress).